Reading from the N-terminus, the 118-residue chain is Large ribosomal subunit protein uL22 (118 aa).

This sequence belongs to the universal ribosomal protein uL22 family. In terms of assembly, part of the 50S ribosomal subunit.

Functionally, this protein binds specifically to 23S rRNA; its binding is stimulated by other ribosomal proteins, e.g. L4, L17, and L20. It is important during the early stages of 50S assembly. It makes multiple contacts with different domains of the 23S rRNA in the assembled 50S subunit and ribosome. Its function is as follows. The globular domain of the protein is located near the polypeptide exit tunnel on the outside of the subunit, while an extended beta-hairpin is found that lines the wall of the exit tunnel in the center of the 70S ribosome. The protein is Large ribosomal subunit protein uL22 of Treponema denticola (strain ATCC 35405 / DSM 14222 / CIP 103919 / JCM 8153 / KCTC 15104).